Reading from the N-terminus, the 264-residue chain is Zinc import ATP-binding protein ZnuC (264 aa).

In terms of domain architecture, ABC transporter spans 11–226 (IELQNIKVVF…PTFIHLFGDQ (216 aa)). Residue 43-50 (GPNGGGKS) participates in ATP binding.

Belongs to the ABC transporter superfamily. Zinc importer (TC 3.A.1.15.5) family. As to quaternary structure, the complex is composed of two ATP-binding proteins (ZnuC), two transmembrane proteins (ZnuB) and a solute-binding protein (ZnuA).

It is found in the cell inner membrane. It catalyses the reaction Zn(2+)(out) + ATP(in) + H2O(in) = Zn(2+)(in) + ADP(in) + phosphate(in) + H(+)(in). In terms of biological role, part of the ABC transporter complex ZnuABC involved in zinc import. Responsible for energy coupling to the transport system. The sequence is that of Zinc import ATP-binding protein ZnuC from Mannheimia succiniciproducens (strain KCTC 0769BP / MBEL55E).